Consider the following 444-residue polypeptide: Glutamyl-tRNA reductase (444 aa).

Substrate-binding positions include 41–44 (TCNR), serine 102, 107–109 (ERE), and glutamine 113. The active-site Nucleophile is cysteine 42. 181 to 186 (GTGSYA) is a binding site for NADP(+).

This sequence belongs to the glutamyl-tRNA reductase family. As to quaternary structure, homodimer.

The enzyme catalyses (S)-4-amino-5-oxopentanoate + tRNA(Glu) + NADP(+) = L-glutamyl-tRNA(Glu) + NADPH + H(+). It functions in the pathway porphyrin-containing compound metabolism; protoporphyrin-IX biosynthesis; 5-aminolevulinate from L-glutamyl-tRNA(Glu): step 1/2. Its function is as follows. Catalyzes the NADPH-dependent reduction of glutamyl-tRNA(Glu) to glutamate 1-semialdehyde (GSA). The polypeptide is Glutamyl-tRNA reductase (Cutibacterium acnes (strain DSM 16379 / KPA171202) (Propionibacterium acnes)).